We begin with the raw amino-acid sequence, 234 residues long: Accessory gland protein Acp29AB (234 aa).

Positions 1–21 are cleaved as a signal peptide; it reads MYATNLLYLLALWNLWLVSGG. 4 N-linked (GlcNAc...) asparagine glycosylation sites follow: asparagine 29, asparagine 61, asparagine 127, and asparagine 164. The 98-residue stretch at 137–234 folds into the C-type lectin domain; the sequence is VTCREMNGHL…SFVCQANQWA (98 aa). Cystine bridges form between cysteine 139–cysteine 228 and cysteine 207–cysteine 220.

It localises to the secreted. Responsible for physiological and behavioral changes in mated female flies. The protein is Accessory gland protein Acp29AB (Acp29AB) of Drosophila simulans (Fruit fly).